A 342-amino-acid chain; its full sequence is Ribosomal RNA small subunit methyltransferase C (342 aa).

The protein belongs to the methyltransferase superfamily. RsmC family. Monomer.

The protein resides in the cytoplasm. The catalysed reaction is guanosine(1207) in 16S rRNA + S-adenosyl-L-methionine = N(2)-methylguanosine(1207) in 16S rRNA + S-adenosyl-L-homocysteine + H(+). In terms of biological role, specifically methylates the guanine in position 1207 of 16S rRNA in the 30S particle. This Salmonella heidelberg (strain SL476) protein is Ribosomal RNA small subunit methyltransferase C.